The primary structure comprises 285 residues: uncharacterized protein (285 aa).

The Guanylate cyclase domain maps to 92–199 (TLLLADVEES…PTINRTARLR (108 aa)).

It belongs to the adenylyl cyclase class-4/guanylyl cyclase family.

This is an uncharacterized protein from Mycobacterium tuberculosis (strain ATCC 25618 / H37Rv).